A 1931-amino-acid polypeptide reads, in one-letter code: Chitin synthase 5 (1931 aa).

A Myosin motor domain is found at 11–777 (LGVTDLSSLA…LFRFLEDRLR (767 aa)). An ATP-binding site is contributed by 122-129 (GPTGSGKS). Residues N510, N538, and N676 are each glycosylated (N-linked (GlcNAc...) asparagine). The segment at 655–677 (VDSLLKSFDQTQTWYIFALRPND) is actin-binding. A disordered region spans residues 798–817 (DPFSPHRYQPTSFDSQDHVY). N-linked (GlcNAc...) asparagine glycosylation occurs at N842. 2 helical membrane-spanning segments follow: residues 912-932 (WVWL…SKIA) and 951-971 (MIIW…GPVI). 3 N-linked (GlcNAc...) asparagine glycosylation sites follow: N1062, N1078, and N1146. The chain crosses the membrane as a helical span at residues 1220 to 1240 (ILLALSCVMVAVIGFKFLSAL). A glycan (N-linked (GlcNAc...) asparagine) is linked at N1583. 3 helical membrane-spanning segments follow: residues 1615 to 1635 (LSTI…YLIV), 1641 to 1661 (IPTL…MIFI), and 1668 to 1688 (MIAW…LLPL). The segment at 1826–1847 (AHRPSLDDTSSFHQPYQPAPRP) is disordered. The region spanning 1875–1930 (AITDSQLERSIRKICANAELDKLTKKGVRKELEREYGVELTERREAINRLVEKVLT) is the DEK-C domain.

In the N-terminal section; belongs to the TRAFAC class CC myosin-kinesin ATPase superfamily. Myosin family. It in the C-terminal section; belongs to the chitin synthase family. Class V subfamily.

The protein localises to the cell membrane. It localises to the cell septum. The protein resides in the cell tip. The enzyme catalyses [(1-&gt;4)-N-acetyl-beta-D-glucosaminyl](n) + UDP-N-acetyl-alpha-D-glucosamine = [(1-&gt;4)-N-acetyl-beta-D-glucosaminyl](n+1) + UDP + H(+). Its function is as follows. Polymerizes chitin, a structural polymer of the cell wall and septum, by transferring the sugar moiety of UDP-GlcNAc to the non-reducing end of the growing chitin polymer. Produces a large proportion of the chitin that is not deacetylated to chitosan. The chain is Chitin synthase 5 from Cryptococcus neoformans var. grubii serotype A (strain H99 / ATCC 208821 / CBS 10515 / FGSC 9487) (Filobasidiella neoformans var. grubii).